Consider the following 285-residue polypeptide: TATA box-binding protein-associated factor RNA polymerase I subunit D (285 aa).

2 disordered regions span residues 1 to 49 and 85 to 112; these read MAQS…RIPT and KKKRKKRKKRKYKPKLRRQGRPSGTRNI. The segment covering 21–39 has biased composition (polar residues); it reads GNQSDDSSNSSLFKTQCVP. The residue at position 24 (S24) is a Phosphoserine. Residues 85–104 show a composition bias toward basic residues; it reads KKKRKKRKKRKYKPKLRRQG. S134 carries the phosphoserine modification. A disordered region spans residues 193-219; the sequence is HKYMDDDGPLSPIEEPSTEDEATDPQS. The residue at position 229 (S229) is a Phosphoserine. Basic and acidic residues-rich tracts occupy residues 242-264 and 273-285; these read NLEQGKIKKESAFSKKSKAKDAT and KGGEHACLHSEVS. A disordered region spans residues 242–285; the sequence is NLEQGKIKKESAFSKKSKAKDATQRGNRRSWKGGEHACLHSEVS.

Component of the transcription factor SL1/TIF-IB complex, composed of TBP and at least TAF1A, TAF1B, TAF1C and TAF1D. Interacts with UBTF.

It is found in the nucleus. In terms of biological role, component of the transcription factor SL1/TIF-IB complex, which is involved in the assembly of the PIC (preinitiation complex) during RNA polymerase I-dependent transcription. The rate of PIC formation probably is primarily dependent on the rate of association of SL1/TIF-IB with the rDNA promoter. SL1/TIF-IB is involved in stabilization of nucleolar transcription factor 1/UBTF on rDNA. Formation of SL1/TIF-IB excludes the association of TBP with TFIID subunits. This chain is TATA box-binding protein-associated factor RNA polymerase I subunit D (Taf1d), found in Rattus norvegicus (Rat).